The primary structure comprises 1029 residues: Tyrosine-protein kinase-like otk (1029 aa).

The N-terminal stretch at 1–18 (MISIYGLVMALMMASVLA) is a signal peptide. Over 19 to 577 (SSSRFQRVPQ…GGDGFLVTRA (559 aa)) the chain is Extracellular. Ig-like C2-type domains lie at 21-104 (SRFQ…REAS), 105-195 (PPAK…RVMS), 247-361 (PEDL…APIS), 364-459 (PGIL…VAIN), and 464-554 (PKFS…VQLV). N-linked (GlcNAc...) asparagine glycosylation occurs at Asn-35. 4 disulfides stabilise this stretch: Cys-42–Cys-91, Cys-133–Cys-184, Cys-272–Cys-350, and Cys-395–Cys-443. N-linked (GlcNAc...) asparagine glycans are attached at residues Asn-332, Asn-413, Asn-425, Asn-440, Asn-453, Asn-508, and Asn-520. Cys-486 and Cys-538 form a disulfide bridge. Residues 578-598 (VLITMTVALAYIVLVVGLMLW) form a helical membrane-spanning segment. Residues 599–1029 (CRYRRQARKA…LSKAMQIAEK (431 aa)) are Cytoplasmic-facing. Disordered stretches follow at residues 613-675 (LSTK…KKSA) and 714-756 (SPSD…KTSM). A compositionally biased stretch (polar residues) spans 651-669 (KSSGDAQKSDDTACSQQSR). Position 674 is a phosphoserine (Ser-674). The region spanning 688–1024 (LSELIQIGRG…QLGAALSKAM (337 aa)) is the Protein kinase; inactive domain. Over residues 716–727 (SDKDADTEKQHS) the composition is skewed to basic and acidic residues.

Belongs to the protein kinase superfamily. Tyr protein kinase family. Insulin receptor subfamily. Interacts with plexA; component of a receptor complex that mediates the repulsive signaling in response to Semaphorin ligands.

Its subcellular location is the cell membrane. In terms of biological role, acts as a calcium-dependent, homophilic cell adhesion molecule that regulates neural recognition during the development of the nervous system. Component of the repulsive Plexin signaling response to regulate motor axon guidance at the embryonic stage. Also component of a receptor complex that is required in the adult visual system to innervate the lamina layer; specific targeting of R1-R6 axons. This chain is Tyrosine-protein kinase-like otk, found in Drosophila sechellia (Fruit fly).